The following is a 176-amino-acid chain: Ribosome maturation factor RimM (176 aa).

The region spanning 93–172 (KDEFFQFDII…EILVKGARDI (80 aa)) is the PRC barrel domain.

Belongs to the RimM family. In terms of assembly, binds ribosomal protein uS19.

The protein localises to the cytoplasm. In terms of biological role, an accessory protein needed during the final step in the assembly of 30S ribosomal subunit, possibly for assembly of the head region. Essential for efficient processing of 16S rRNA. May be needed both before and after RbfA during the maturation of 16S rRNA. It has affinity for free ribosomal 30S subunits but not for 70S ribosomes. This Campylobacter concisus (strain 13826) protein is Ribosome maturation factor RimM.